Here is a 517-residue protein sequence, read N- to C-terminus: Nicotine N-demethylase CYP82E4 (517 aa).

A helical membrane pass occupies residues 2–22; it reads VFPIEAIVGLVTFTFLFFFLW. K254 participates in a covalent cross-link: Glycyl lysine isopeptide (Lys-Gly) (interchain with G-Cter in ubiquitin). C457 provides a ligand contact to heme.

It belongs to the cytochrome P450 family. CYP82E2 subfamily. It depends on heme as a cofactor. In terms of tissue distribution, expressed at low levels in green leaves.

The protein resides in the membrane. The catalysed reaction is (S)-nicotine + reduced [NADPH--hemoprotein reductase] + O2 = (S)-nornicotine + formaldehyde + oxidized [NADPH--hemoprotein reductase] + H2O + H(+). Its pathway is alkaloid biosynthesis; nicotine biosynthesis. Functionally, involved in the biosynthesis of pyridine alkaloid natural products, leading mainly to the production of anabasine, anatabine, nicotine and nornicotine, effective deterrents against herbivores with antiparasitic and pesticide properties (neurotoxins); nornicotine serves as the precursor in the synthesis of the carcinogen compound N'-nitrosonornicotine (NNN). Catalyzes the demethylation of nicotine to form nornicotine. The sequence is that of Nicotine N-demethylase CYP82E4 from Nicotiana tabacum (Common tobacco).